Reading from the N-terminus, the 335-residue chain is Carboxylesterase 1 (335 aa).

Positions His-90–Gly-92 match the Involved in the stabilization of the negatively charged intermediate by the formation of the oxyanion hole motif. Paraoxon is bound by residues Gly-92 to Gly-93, Ser-169, and Ala-170. The active site involves Ser-169. Catalysis depends on residues Asp-276 and His-306.

This sequence belongs to the 'GDXG' lipolytic enzyme family.

The enzyme catalyses a carboxylic ester + H2O = an alcohol + a carboxylate + H(+). With respect to regulation, is inhibited by the organophosphates paraoxon and dimethylchlorophosphate (DMCP). In terms of biological role, carboxylesterase acting on esters with varying acyl chain length. The polypeptide is Carboxylesterase 1 (CXE1) (Actinidia eriantha (Velvet vine)).